The chain runs to 357 residues: Biotin synthase (357 aa).

Residues 41-268 (NEVQISRLLS…KSRVRLSAGR (228 aa)) enclose the Radical SAM core domain. [4Fe-4S] cluster contacts are provided by Cys56, Cys60, and Cys63. [2Fe-2S] cluster-binding residues include Cys100, Cys131, Cys191, and Arg263.

It belongs to the radical SAM superfamily. Biotin synthase family. In terms of assembly, homodimer. [4Fe-4S] cluster is required as a cofactor. [2Fe-2S] cluster serves as cofactor.

It carries out the reaction (4R,5S)-dethiobiotin + (sulfur carrier)-SH + 2 reduced [2Fe-2S]-[ferredoxin] + 2 S-adenosyl-L-methionine = (sulfur carrier)-H + biotin + 2 5'-deoxyadenosine + 2 L-methionine + 2 oxidized [2Fe-2S]-[ferredoxin]. It participates in cofactor biosynthesis; biotin biosynthesis; biotin from 7,8-diaminononanoate: step 2/2. In terms of biological role, catalyzes the conversion of dethiobiotin (DTB) to biotin by the insertion of a sulfur atom into dethiobiotin via a radical-based mechanism. In Shewanella denitrificans (strain OS217 / ATCC BAA-1090 / DSM 15013), this protein is Biotin synthase.